Consider the following 96-residue polypeptide: Co-chaperonin GroES 2 (96 aa).

The protein belongs to the GroES chaperonin family. Heptamer of 7 subunits arranged in a ring. Interacts with the chaperonin GroEL.

It localises to the cytoplasm. In terms of biological role, together with the chaperonin GroEL, plays an essential role in assisting protein folding. The GroEL-GroES system forms a nano-cage that allows encapsulation of the non-native substrate proteins and provides a physical environment optimized to promote and accelerate protein folding. GroES binds to the apical surface of the GroEL ring, thereby capping the opening of the GroEL channel. This is Co-chaperonin GroES 2 from Vibrio vulnificus (strain CMCP6).